The following is a 445-amino-acid chain: Exodeoxyribonuclease 7 large subunit (445 aa).

The protein belongs to the XseA family. In terms of assembly, heterooligomer composed of large and small subunits.

It localises to the cytoplasm. It catalyses the reaction Exonucleolytic cleavage in either 5'- to 3'- or 3'- to 5'-direction to yield nucleoside 5'-phosphates.. Functionally, bidirectionally degrades single-stranded DNA into large acid-insoluble oligonucleotides, which are then degraded further into small acid-soluble oligonucleotides. The chain is Exodeoxyribonuclease 7 large subunit from Nautilia profundicola (strain ATCC BAA-1463 / DSM 18972 / AmH).